Consider the following 243-residue polypeptide: Triosephosphate isomerase (243 aa).

Residue 9 to 11 (NWK) participates in substrate binding. The active-site Electrophile is the His96. Glu165 acts as the Proton acceptor in catalysis. Substrate-binding positions include Gly171, Ser204, and 225-226 (GG).

It belongs to the triosephosphate isomerase family. In terms of assembly, homodimer.

Its subcellular location is the cytoplasm. The enzyme catalyses D-glyceraldehyde 3-phosphate = dihydroxyacetone phosphate. The protein operates within carbohydrate biosynthesis; gluconeogenesis. Its pathway is carbohydrate degradation; glycolysis; D-glyceraldehyde 3-phosphate from glycerone phosphate: step 1/1. Functionally, involved in the gluconeogenesis. Catalyzes stereospecifically the conversion of dihydroxyacetone phosphate (DHAP) to D-glyceraldehyde-3-phosphate (G3P). This Synechococcus sp. (strain WH7803) protein is Triosephosphate isomerase.